Consider the following 130-residue polypeptide: Tripartite terminase subunit 2 (130 aa).

This sequence belongs to the herpesviridae TRM2 protein family. In terms of assembly, associates with TRM1 and TRM3 to form the tripartite terminase complex.

It localises to the host nucleus. Its function is as follows. Component of the molecular motor that translocates viral genomic DNA in empty capsid during DNA packaging. Forms a tripartite terminase complex together with TRM1 and TRM3 in the host cytoplasm. Once the complex reaches the host nucleus, it interacts with the capsid portal vertex. This portal forms a ring in which genomic DNA is translocated into the capsid. The polypeptide is Tripartite terminase subunit 2 (Homo sapiens (Human)).